A 583-amino-acid chain; its full sequence is Steryl-sulfatase (583 aa).

Positions 1–21 are cleaved as a signal peptide; sequence MPLRKMKIPFLLLFFLWEAES. The Lumenal segment spans residues 22–184; sequence HAASRPNIIL…GSVFTTGFKR (163 aa). The Ca(2+) site is built by D35 and D36. N47 carries an N-linked (GlcNAc...) asparagine glycan. C75 is a binding site for Ca(2+). C75 serves as the catalytic Nucleophile. C75 bears the 3-oxoalanine (Cys) mark. The active site involves H136. Cystine bridges form between C141/C148 and C170/C242. A helical transmembrane segment spans residues 185-208; the sequence is LVFLPLQIVGVTLLTLAALNCLGL. The Cytoplasmic segment spans residues 209 to 212; sequence LHVP. Residues 213–234 form a helical membrane-spanning segment; sequence LGVFFSLLFLAALILTLFLGFL. The Lumenal portion of the chain corresponds to 235–583; the sequence is HYFRPLNCFM…REKQDKRLSR (349 aa). N259 is a glycosylation site (N-linked (GlcNAc...) asparagine). Ca(2+)-binding residues include D342 and Q343. Cystine bridges form between C446–C489, C481–C487, C562–C570, and C563–C572.

The protein belongs to the sulfatase family. As to quaternary structure, homodimer. The cofactor is Ca(2+). Post-translationally, the conversion to 3-oxoalanine (also known as C-formylglycine, FGly), of a serine or cysteine residue in prokaryotes and of a cysteine residue in eukaryotes, is critical for catalytic activity.

The protein localises to the cytoplasmic vesicle. Its subcellular location is the secretory vesicle. It localises to the microneme membrane. It is found in the endoplasmic reticulum membrane. It carries out the reaction dehydroepiandrosterone 3-sulfate + H2O = 3beta-hydroxyandrost-5-en-17-one + sulfate + H(+). The catalysed reaction is estrone 3-sulfate + H2O = estrone + sulfate + H(+). Functionally, catalyzes the conversion of sulfated steroid precursors, such as dehydroepiandrosterone sulfate (DHEA-S) and estrone sulfate to the free steroid. The protein is Steryl-sulfatase (STS) of Homo sapiens (Human).